The primary structure comprises 361 residues: Phospho-N-acetylmuramoyl-pentapeptide-transferase (361 aa).

A run of 10 helical transmembrane segments spans residues 28–48 (LSMFTSMFVVLLIGTPFIKFF), 70–90 (IGTPTMGGVLILLGLFSGILL), 94–114 (LSNYHIWFLLFIVSGFGLLGA), 129–149 (VSFKFKIISQILIAIVGIYGL), 169–189 (LIINLGWFFIPFSIFIIVGSS), 205–225 (PVILVAACFAFISYVTGNIVF), 237–257 (MGEVSVFCGSIIGACLGFLWF), 264–284 (IFMGDTGSLALGGSLGAIGII), 289–309 (IVLAITGGLFVLEAVSVIIQV), and 338–358 (TVVIRFWIISIILAMIGLATL).

It belongs to the glycosyltransferase 4 family. MraY subfamily. Requires Mg(2+) as cofactor.

It is found in the cell inner membrane. It catalyses the reaction UDP-N-acetyl-alpha-D-muramoyl-L-alanyl-gamma-D-glutamyl-meso-2,6-diaminopimeloyl-D-alanyl-D-alanine + di-trans,octa-cis-undecaprenyl phosphate = di-trans,octa-cis-undecaprenyl diphospho-N-acetyl-alpha-D-muramoyl-L-alanyl-D-glutamyl-meso-2,6-diaminopimeloyl-D-alanyl-D-alanine + UMP. Its pathway is cell wall biogenesis; peptidoglycan biosynthesis. In terms of biological role, catalyzes the initial step of the lipid cycle reactions in the biosynthesis of the cell wall peptidoglycan: transfers peptidoglycan precursor phospho-MurNAc-pentapeptide from UDP-MurNAc-pentapeptide onto the lipid carrier undecaprenyl phosphate, yielding undecaprenyl-pyrophosphoryl-MurNAc-pentapeptide, known as lipid I. This is Phospho-N-acetylmuramoyl-pentapeptide-transferase from Pelagibacter ubique (strain HTCC1062).